A 244-amino-acid chain; its full sequence is Cell division protein DivIB (244 aa).

Residues 1 to 6 (MKIKWP) are Cytoplasmic-facing. Residues 7 to 27 (LQLWISLAVFVTIAVGTLLLL) traverse the membrane as a helical segment. The 77-residue stretch at 28–104 (QPWQTIKTVT…IDIAEKVTAG (77 aa)) folds into the POTRA domain. At 28 to 244 (QPWQTIKTVT…KADNKAHQKQ (217 aa)) the chain is on the extracellular side.

It belongs to the FtsQ/DivIB family. DivIB subfamily.

The protein resides in the cell membrane. Its function is as follows. Cell division protein that may be involved in stabilizing or promoting the assembly of the division complex. This chain is Cell division protein DivIB, found in Leuconostoc kimchii (strain IMSNU 11154 / KCTC 2386 / IH25).